The sequence spans 336 residues: tRNA N6-adenosine threonylcarbamoyltransferase (336 aa).

Residues His114 and His118 each coordinate Fe cation. Substrate is bound by residues 136 to 140 (LVSGG), Asp169, Gly182, Asp186, and Asn275. Fe cation is bound at residue Asp301.

Belongs to the KAE1 / TsaD family. Requires Fe(2+) as cofactor.

It is found in the cytoplasm. The catalysed reaction is L-threonylcarbamoyladenylate + adenosine(37) in tRNA = N(6)-L-threonylcarbamoyladenosine(37) in tRNA + AMP + H(+). Required for the formation of a threonylcarbamoyl group on adenosine at position 37 (t(6)A37) in tRNAs that read codons beginning with adenine. Is involved in the transfer of the threonylcarbamoyl moiety of threonylcarbamoyl-AMP (TC-AMP) to the N6 group of A37, together with TsaE and TsaB. TsaD likely plays a direct catalytic role in this reaction. In Streptococcus pneumoniae serotype 2 (strain D39 / NCTC 7466), this protein is tRNA N6-adenosine threonylcarbamoyltransferase.